The following is a 430-amino-acid chain: Enolase (430 aa).

(2R)-2-phosphoglycerate is bound at residue glutamine 165. Residue glutamate 207 is the Proton donor of the active site. Aspartate 244, glutamate 287, and aspartate 314 together coordinate Mg(2+). (2R)-2-phosphoglycerate-binding residues include lysine 339, arginine 368, serine 369, and lysine 390. Lysine 339 functions as the Proton acceptor in the catalytic mechanism.

This sequence belongs to the enolase family. As to quaternary structure, component of the RNA degradosome, a multiprotein complex involved in RNA processing and mRNA degradation. Mg(2+) is required as a cofactor.

It localises to the cytoplasm. It is found in the secreted. Its subcellular location is the cell surface. It catalyses the reaction (2R)-2-phosphoglycerate = phosphoenolpyruvate + H2O. The protein operates within carbohydrate degradation; glycolysis; pyruvate from D-glyceraldehyde 3-phosphate: step 4/5. Functionally, catalyzes the reversible conversion of 2-phosphoglycerate (2-PG) into phosphoenolpyruvate (PEP). It is essential for the degradation of carbohydrates via glycolysis. The polypeptide is Enolase (Stenotrophomonas maltophilia (strain R551-3)).